The following is a 452-amino-acid chain: MELLKLNRSVQGPGPGSGSSLCRPGVSLLNSSSAGNLSCDPPRIRGTGTRELEMAIRITLYAVIFLMSVGGNVLIIVVLGLSRRLRTVTNAFLLSLAVSDLLLAVACMPFTLLPNLMGTFIFGTVICKAISYLMGVSVSVSTLNLVAIALERYSAICRPLQARVWQTRSHAARVILATWLLSGLLMVPYPVYTMVQPVGPRVLQCMHRWPSARVQQTWSVLLLLLLFFIPGVVIAVAYGLISRELYLGLHFDGENDSETQSRARNQGGLPGGAAPGPVHQNGGCRPVTSVAGEDSDGCCVQLPRSRLEMTTLTTPTPGPVPGPRPNQAKLLAKKRVVRMLLVIVLLFFLCWLPVYSVNTWRAFDGPGAQRALSGAPISFIHLLSYVSACVNPLVYCFMHRRFRQACLDTCARCCPRPPRARPQPLPDEDPPTPSIASLSRLSYTTISTLGPG.

A disordered region spans residues 1–21 (MELLKLNRSVQGPGPGSGSSL). Over 1-57 (MELLKLNRSVQGPGPGSGSSLCRPGVSLLNSSSAGNLSCDPPRIRGTGTRELEMAIR) the chain is Extracellular. N7, N30, and N36 each carry an N-linked (GlcNAc...) asparagine glycan. Residues 58-79 (ITLYAVIFLMSVGGNVLIIVVL) traverse the membrane as a helical segment. At 80–87 (GLSRRLRT) the chain is on the cytoplasmic side. A helical transmembrane segment spans residues 88–109 (VTNAFLLSLAVSDLLLAVACMP). Over 110-131 (FTLLPNLMGTFIFGTVICKAIS) the chain is Extracellular. A disulfide bridge links C127 with C205. A helical membrane pass occupies residues 132 to 150 (YLMGVSVSVSTLNLVAIAL). The Cytoplasmic segment spans residues 151–170 (ERYSAICRPLQARVWQTRSH). A helical transmembrane segment spans residues 171–189 (AARVILATWLLSGLLMVPY). Over 190–219 (PVYTMVQPVGPRVLQCMHRWPSARVQQTWS) the chain is Extracellular. Residues 220–242 (VLLLLLLFFIPGVVIAVAYGLIS) form a helical membrane-spanning segment. Residues 243-338 (RELYLGLHFD…KLLAKKRVVR (96 aa)) lie on the Cytoplasmic side of the membrane. The disordered stretch occupies residues 257 to 286 (SETQSRARNQGGLPGGAAPGPVHQNGGCRP). Residues 339-360 (MLLVIVLLFFLCWLPVYSVNTW) form a helical membrane-spanning segment. Topologically, residues 361–378 (RAFDGPGAQRALSGAPIS) are extracellular. Residues 379–399 (FIHLLSYVSACVNPLVYCFMH) form a helical membrane-spanning segment. The Cytoplasmic segment spans residues 400 to 452 (RRFRQACLDTCARCCPRPPRARPQPLPDEDPPTPSIASLSRLSYTTISTLGPG). Residue C413 is the site of S-palmitoyl cysteine attachment. The segment at 421-452 (RPQPLPDEDPPTPSIASLSRLSYTTISTLGPG) is disordered. Residues 434–452 (SIASLSRLSYTTISTLGPG) are compositionally biased toward polar residues.

This sequence belongs to the G-protein coupled receptor 1 family. As to expression, parietal cells, pancreas, brain and various neoplastic tissues.

The protein localises to the cell membrane. In terms of biological role, receptor for gastrin and cholecystokinin. The CCK-B receptors occur throughout the central nervous system where they modulate anxiety, analgesia, arousal, and neuroleptic activity. This receptor mediates its action by association with G proteins that activate a phosphatidylinositol-calcium second messenger system. In Rattus norvegicus (Rat), this protein is Gastrin/cholecystokinin type B receptor (Cckbr).